The following is an 882-amino-acid chain: DNA mismatch repair protein MutS (882 aa).

627–634 serves as a coordination point for ATP; sequence GPNMAGKS.

This sequence belongs to the DNA mismatch repair MutS family.

Functionally, this protein is involved in the repair of mismatches in DNA. It is possible that it carries out the mismatch recognition step. This protein has a weak ATPase activity. This chain is DNA mismatch repair protein MutS, found in Anaeromyxobacter dehalogenans (strain 2CP-1 / ATCC BAA-258).